The following is a 689-amino-acid chain: Glycine--tRNA ligase beta subunit (689 aa).

Belongs to the class-II aminoacyl-tRNA synthetase family. In terms of assembly, tetramer of two alpha and two beta subunits.

Its subcellular location is the cytoplasm. It carries out the reaction tRNA(Gly) + glycine + ATP = glycyl-tRNA(Gly) + AMP + diphosphate. The chain is Glycine--tRNA ligase beta subunit from Shigella flexneri serotype 5b (strain 8401).